A 257-amino-acid polypeptide reads, in one-letter code: Acyl-[acyl-carrier-protein]--UDP-N-acetylglucosamine O-acyltransferase (257 aa).

Belongs to the transferase hexapeptide repeat family. LpxA subfamily. As to quaternary structure, homotrimer.

The protein localises to the cytoplasm. The enzyme catalyses a (3R)-hydroxyacyl-[ACP] + UDP-N-acetyl-alpha-D-glucosamine = a UDP-3-O-[(3R)-3-hydroxyacyl]-N-acetyl-alpha-D-glucosamine + holo-[ACP]. It participates in glycolipid biosynthesis; lipid IV(A) biosynthesis; lipid IV(A) from (3R)-3-hydroxytetradecanoyl-[acyl-carrier-protein] and UDP-N-acetyl-alpha-D-glucosamine: step 1/6. Functionally, involved in the biosynthesis of lipid A, a phosphorylated glycolipid that anchors the lipopolysaccharide to the outer membrane of the cell. The polypeptide is Acyl-[acyl-carrier-protein]--UDP-N-acetylglucosamine O-acyltransferase (Anaeromyxobacter dehalogenans (strain 2CP-1 / ATCC BAA-258)).